The following is a 579-amino-acid chain: Nuclear receptor coactivator 5 (579 aa).

The residue at position 1 (Met-1) is an N-acetylmethionine. The interval Met-1–Ser-77 is disordered. The transcription repression stretch occupies residues Met-1–Pro-158. Thr-3 is subject to Phosphothreonine. Phosphoserine is present on residues Ser-9, Ser-21, Ser-29, Ser-34, Ser-96, Ser-116, Ser-126, Ser-143, and Ser-151. Residues Thr-11–Ser-77 are compositionally biased toward basic and acidic residues. A disordered region spans residues Tyr-148–Arg-172. Residue Thr-274 is modified to Phosphothreonine. An LXXLL motif motif is present at residues Leu-345–Leu-349. Phosphoserine is present on residues Ser-378 and Ser-381. Disordered stretches follow at residues Ser-378–Gln-428 and Ala-446–Ser-529. 2 stretches are compositionally biased toward low complexity: residues Ser-395 to Thr-420 and Ala-446 to Ser-460. The segment at Gly-458–Tyr-579 is transcription activation. Over residues Gln-461–Pro-485 the composition is skewed to polar residues.

Binds HTATIP2/TIP30. Interacts with YLPM1. Forms a complex with ILF2, ILF3, YLPM1, KHDRBS1, RBMX and PPP1CA.

It is found in the nucleus. Functionally, nuclear receptor coregulator that can have both coactivator and corepressor functions. Interacts with nuclear receptors for steroids (ESR1 and ESR2) independently of the steroid binding domain (AF-2) of the ESR receptors, and with the orphan nuclear receptor NR1D2. Involved in the coactivation of nuclear steroid receptors (ER) as well as the corepression of MYC in response to 17-beta-estradiol (E2). The protein is Nuclear receptor coactivator 5 (Ncoa5) of Mus musculus (Mouse).